Consider the following 526-residue polypeptide: MMTAPSDTEGYTGGQGDSPDSPDRNRQRNLVDDHNHNQGQDDGYSQGHVTGTGLHPLHQSQGRYPRASSRRASAAPLNYDVPDDYAHLEASNISPVQNPDEDPITRLDTLERVRTRDRDYLREQRRKPLPPPQEPESSAEDYEREKQAGVVAKRQKVSRLATELYTISYLIFFSLLGTLARLGLQALTSAYPQSPIIFPSIWPNFAGCVVMGFLAEDRMLFRPDWGQQQPNPKKDDDDDEEAKDIDPAAAKKAHMALKKTIPLYVGLATGFCGSFTSFSSFIRDIYLALSNDLAAHGSSAAPVSRNGGYSFMALLAVTITTISLSLSGLFAGAHLAIAIATLFTRFDLGLPYTFVSRILDRLIVLLGFGCWLGAVLLSIWPPDRHSAQPEKERWRGTATFALVFAPLGCLTRFYASAHLNGRLPSFPLGTFVVNMLGTAVLGMAWDLNHVPSLGGVVGCQVLQGVADGFCGCLTTVSTWVSELAALRRRHAYVYGGASVGGGLALMVVVMGSLRWTEGFGEVKCIS.

Disordered stretches follow at residues 1-73 (MMTA…RRAS) and 90-149 (ASNI…KQAG). Over 1 to 159 (MMTAPSDTEG…VVAKRQKVSR (159 aa)) the chain is Cytoplasmic. Basic and acidic residues-rich tracts occupy residues 21–36 (SPDR…DHNH) and 103–123 (PITR…YLRE). The helical transmembrane segment at 160-180 (LATELYTISYLIFFSLLGTLA) threads the bilayer. At 181-194 (RLGLQALTSAYPQS) the chain is on the extracellular side. The chain crosses the membrane as a helical span at residues 195–215 (PIIFPSIWPNFAGCVVMGFLA). Over 216–260 (EDRMLFRPDWGQQQPNPKKDDDDDEEAKDIDPAAAKKAHMALKKT) the chain is Cytoplasmic. Residues 223–242 (PDWGQQQPNPKKDDDDDEEA) are disordered. A helical membrane pass occupies residues 261–281 (IPLYVGLATGFCGSFTSFSSF). Residues 282-310 (IRDIYLALSNDLAAHGSSAAPVSRNGGYS) lie on the Extracellular side of the membrane. A helical membrane pass occupies residues 311–331 (FMALLAVTITTISLSLSGLFA). At 332 to 361 (GAHLAIAIATLFTRFDLGLPYTFVSRILDR) the chain is on the cytoplasmic side. The helical transmembrane segment at 362 to 382 (LIVLLGFGCWLGAVLLSIWPP) threads the bilayer. Over 383 to 398 (DRHSAQPEKERWRGTA) the chain is Extracellular. The chain crosses the membrane as a helical span at residues 399–419 (TFALVFAPLGCLTRFYASAHL). The Cytoplasmic portion of the chain corresponds to 420–424 (NGRLP). The helical transmembrane segment at 425-445 (SFPLGTFVVNMLGTAVLGMAW) threads the bilayer. Residues 446–452 (DLNHVPS) are Extracellular-facing. A helical membrane pass occupies residues 453–473 (LGGVVGCQVLQGVADGFCGCL). Residues 474 to 492 (TTVSTWVSELAALRRRHAY) lie on the Cytoplasmic side of the membrane. The helical transmembrane segment at 493 to 513 (VYGGASVGGGLALMVVVMGSL) threads the bilayer. Over 514-526 (RWTEGFGEVKCIS) the chain is Extracellular.

Belongs to the fluoride channel Fluc/FEX (TC 1.A.43) family.

It localises to the cell membrane. It carries out the reaction fluoride(in) = fluoride(out). Functionally, fluoride channel required for the rapid expulsion of cytoplasmic fluoride. The chain is Fluoride export protein 1 from Neurospora crassa (strain ATCC 24698 / 74-OR23-1A / CBS 708.71 / DSM 1257 / FGSC 987).